The primary structure comprises 863 residues: Protein ARG5,6, mitochondrial (863 aa).

Residues 1-65 constitute a mitochondrion transit peptide; that stretch reads MPSASLLVST…RYVSSTNGFS (65 aa). Residues 353 to 505 enclose the N-acetyltransferase domain; sequence KLVKRSSIGE…NFVKSCDTAS (153 aa). Position 359 is a phosphoserine (Ser-359). The active site involves Cys-675.

The protein in the N-terminal section; belongs to the acetylglutamate kinase family. It in the C-terminal section; belongs to the NAGSA dehydrogenase family. The protein precursor is cleaved into the two biologically active enzymes, the kinase and the reductase.

It localises to the mitochondrion. The catalysed reaction is N-acetyl-L-glutamate 5-semialdehyde + phosphate + NADP(+) = N-acetyl-L-glutamyl 5-phosphate + NADPH + H(+). It carries out the reaction N-acetyl-L-glutamate + ATP = N-acetyl-L-glutamyl 5-phosphate + ADP. Its pathway is amino-acid biosynthesis; L-arginine biosynthesis; N(2)-acetyl-L-ornithine from L-glutamate: step 2/4. It functions in the pathway amino-acid biosynthesis; L-arginine biosynthesis; N(2)-acetyl-L-ornithine from L-glutamate: step 3/4. The kinase activity is inhibited by arginine. The polypeptide is Protein ARG5,6, mitochondrial (ARG5,6) (Saccharomyces cerevisiae (strain ATCC 204508 / S288c) (Baker's yeast)).